The chain runs to 329 residues: Phosphate acetyltransferase (329 aa).

The protein belongs to the phosphate acetyltransferase and butyryltransferase family.

It localises to the cytoplasm. It carries out the reaction acetyl-CoA + phosphate = acetyl phosphate + CoA. It functions in the pathway metabolic intermediate biosynthesis; acetyl-CoA biosynthesis; acetyl-CoA from acetate: step 2/2. This Corynebacterium glutamicum (strain ATCC 13032 / DSM 20300 / JCM 1318 / BCRC 11384 / CCUG 27702 / LMG 3730 / NBRC 12168 / NCIMB 10025 / NRRL B-2784 / 534) protein is Phosphate acetyltransferase (pta).